The sequence spans 129 residues: Small ribosomal subunit protein uS12 (129 aa).

Position 89 is a 3-methylthioaspartic acid (Asp89). The tract at residues 110–129 is disordered; it reads RKQGRSRYGAPRKQVVATKK.

It belongs to the universal ribosomal protein uS12 family. As to quaternary structure, part of the 30S ribosomal subunit. Contacts proteins S8 and S17. May interact with IF1 in the 30S initiation complex.

In terms of biological role, with S4 and S5 plays an important role in translational accuracy. Its function is as follows. Interacts with and stabilizes bases of the 16S rRNA that are involved in tRNA selection in the A site and with the mRNA backbone. Located at the interface of the 30S and 50S subunits, it traverses the body of the 30S subunit contacting proteins on the other side and probably holding the rRNA structure together. The combined cluster of proteins S8, S12 and S17 appears to hold together the shoulder and platform of the 30S subunit. This is Small ribosomal subunit protein uS12 from Rickettsia bellii (strain OSU 85-389).